The following is a 248-amino-acid chain: Phycocyanobilin:ferredoxin oxidoreductase (248 aa).

This sequence belongs to the HY2 family.

The enzyme catalyses (2R,3Z)-phycocyanobilin + 4 oxidized [2Fe-2S]-[ferredoxin] = biliverdin IXalpha + 4 reduced [2Fe-2S]-[ferredoxin] + 4 H(+). In terms of biological role, catalyzes the four-electron reduction of biliverdin IX-alpha (2-electron reduction at both the A and D rings); the reaction proceeds via an isolatable 2-electron intermediate, 181,182-dihydrobiliverdin. The polypeptide is Phycocyanobilin:ferredoxin oxidoreductase (Synechococcus sp. (strain ATCC 27144 / PCC 6301 / SAUG 1402/1) (Anacystis nidulans)).